A 221-amino-acid polypeptide reads, in one-letter code: Serine/arginine-rich splicing factor 9 (221 aa).

RRM domains follow at residues G14–A89 and F111–G187. K36 is covalently cross-linked (Glycyl lysine isopeptide (Lys-Gly) (interchain with G-Cter in SUMO2)). Residues G187–G198 are compositionally biased toward low complexity. Residues G187 to Y221 are disordered. Positions T188–R200 are interaction with SAFB1. 6 positions are modified to phosphoserine: S189, S193, S195, S204, S208, and S211. Y214 is modified (phosphotyrosine). Position 216 is a phosphoserine (S216).

Belongs to the splicing factor SR family. As to quaternary structure, interacts with KHDRBS3. Interacts with HABP4. Interacts with NOL3/ARC/NOP30. Interacts with NSEP1/YB-1/YB1. Interacts with SAFB/SAFB1. Interacts with SRSF6/SFRS6. Interacts with TRA2B/SFRS10. Interacts with C1QBP. May also interact with DUSP11/PIR1. Extensively phosphorylated on serine residues in the RS domain.

Its subcellular location is the nucleus. Plays a role in constitutive splicing and can modulate the selection of alternative splice sites. Represses the splicing of MAPT/Tau exon 10. This Rattus norvegicus (Rat) protein is Serine/arginine-rich splicing factor 9 (Srsf9).